A 404-amino-acid polypeptide reads, in one-letter code: Cytoplasmic tRNA 2-thiolation protein 2 (404 aa).

It belongs to the CTU2/NCS2 family.

The protein localises to the cytoplasm. It functions in the pathway tRNA modification; 5-methoxycarbonylmethyl-2-thiouridine-tRNA biosynthesis. In terms of biological role, plays a central role in 2-thiolation of mcm(5)S(2)U at tRNA wobble positions of tRNA(Lys), tRNA(Glu) and tRNA(Gln). May act by forming a heterodimer with NCS6/CTU1 that ligates sulfur from thiocarboxylated URM1 onto the uridine of tRNAs at wobble position. The polypeptide is Cytoplasmic tRNA 2-thiolation protein 2 (Drosophila erecta (Fruit fly)).